The chain runs to 371 residues: Cytochrome b (371 aa).

4 helical membrane passes run 25-45 (FGSM…FLAV), 69-90 (WMMQ…YIHI), 105-125 (WLSG…GYVL), and 170-190 (FSAL…LHIM). Heme b contacts are provided by H75 and H89. Residues H174 and H188 each contribute to the heme b site. Position 193 (H193) interacts with a ubiquinone. Transmembrane regions (helical) follow at residues 218–238 (YKDL…VSFL), 280–300 (LGGA…PFTH), 312–332 (IMQL…WSAT), and 339–358 (FTVI…IMNP).

The protein belongs to the cytochrome b family. In terms of assembly, the cytochrome bc1 complex contains 3 respiratory subunits (MT-CYB, CYC1 and UQCRFS1), 2 core proteins (UQCRC1 and UQCRC2) and probably 6 low-molecular weight proteins. Heme b serves as cofactor.

Its subcellular location is the mitochondrion inner membrane. In terms of biological role, component of the ubiquinol-cytochrome c reductase complex (complex III or cytochrome b-c1 complex) that is part of the mitochondrial respiratory chain. The b-c1 complex mediates electron transfer from ubiquinol to cytochrome c. Contributes to the generation of a proton gradient across the mitochondrial membrane that is then used for ATP synthesis. This chain is Cytochrome b (MT-CYB), found in Eryx elegans (Central Asian sand boa).